The primary structure comprises 450 residues: BAG family molecular chaperone regulator 5 (450 aa).

BAG domains follow at residues 9-86, 95-167, 182-260, 275-350, and 365-442; these read SIKR…EQNA, EAIF…ESCA, SVSK…DLDE, SILK…DLKE, and EHQS…YYLD.

Binds to the ATPase domain of HSP/HSC70 chaperones.

Its function is as follows. Co-chaperone for HSP/HSP70 proteins. It functions as a nucleotide-exchange factor promoting the release of ADP from HSP70, thereby activating HSP70-mediated protein refolding. This Gallus gallus (Chicken) protein is BAG family molecular chaperone regulator 5 (BAG5).